A 107-amino-acid chain; its full sequence is Nucleoid-associated protein PHZ_c0369 (107 aa).

The protein belongs to the YbaB/EbfC family. As to quaternary structure, homodimer.

It is found in the cytoplasm. The protein localises to the nucleoid. In terms of biological role, binds to DNA and alters its conformation. May be involved in regulation of gene expression, nucleoid organization and DNA protection. This is Nucleoid-associated protein PHZ_c0369 from Phenylobacterium zucineum (strain HLK1).